The primary structure comprises 201 residues: Ribonuclease MRP protein subunit RMP1 (201 aa).

The helical transmembrane segment at 86–108 threads the bilayer; it reads YWQFNGVIALGQFVTLGCTLVTL.

As to quaternary structure, component of RNase MRP complex which consists of an RNA moiety and at least 10 protein subunits including POP1, POP3, POP4, POP5, POP6, POP7, POP8, RMP1, RPP1 and SNM1, many of which are shared with the RNase P complex.

The protein localises to the membrane. It is found in the cytoplasm. It localises to the nucleus. Functionally, functions as part of ribonuclease MRP (RNase MRP), which is involved in rRNA processing in mitochondria. The sequence is that of Ribonuclease MRP protein subunit RMP1 from Saccharomyces cerevisiae (strain ATCC 204508 / S288c) (Baker's yeast).